We begin with the raw amino-acid sequence, 99 residues long: Aspartyl/glutamyl-tRNA(Asn/Gln) amidotransferase subunit C (99 aa).

The protein belongs to the GatC family. Heterotrimer of A, B and C subunits.

It carries out the reaction L-glutamyl-tRNA(Gln) + L-glutamine + ATP + H2O = L-glutaminyl-tRNA(Gln) + L-glutamate + ADP + phosphate + H(+). It catalyses the reaction L-aspartyl-tRNA(Asn) + L-glutamine + ATP + H2O = L-asparaginyl-tRNA(Asn) + L-glutamate + ADP + phosphate + 2 H(+). In terms of biological role, allows the formation of correctly charged Asn-tRNA(Asn) or Gln-tRNA(Gln) through the transamidation of misacylated Asp-tRNA(Asn) or Glu-tRNA(Gln) in organisms which lack either or both of asparaginyl-tRNA or glutaminyl-tRNA synthetases. The reaction takes place in the presence of glutamine and ATP through an activated phospho-Asp-tRNA(Asn) or phospho-Glu-tRNA(Gln). The protein is Aspartyl/glutamyl-tRNA(Asn/Gln) amidotransferase subunit C of Orientia tsutsugamushi (strain Ikeda) (Rickettsia tsutsugamushi).